Consider the following 159-residue polypeptide: IQ domain-containing protein J (159 aa).

The region spanning 47-67 (ESKVKIIQRAWREYLQRQEPL) is the IQ domain. The tract at residues 63–88 (RQEPLGKRSPSPPSVSSEKLSSSVSM) is disordered. Positions 76 to 87 (SVSSEKLSSSVS) are enriched in low complexity.

This chain is IQ domain-containing protein J, found in Homo sapiens (Human).